Here is a 213-residue protein sequence, read N- to C-terminus: Ras-related protein Rab-4A (213 aa).

GTP contacts are provided by Gly-18, Thr-19, Gly-20, Lys-21, Ser-22, Cys-23, Ser-37, His-39, and Thr-40. Ser-22 contributes to the Mg(2+) binding site. Residues 39–44 carry the Switch 1 motif; it reads HTIGVE. Thr-40 and Asp-63 together coordinate Mg(2+). A Switch 2 motif is present at residues 65–74; that stretch reads AGQERFRSVT. GTP contacts are provided by Gly-66, Asn-121, Lys-122, Asp-124, Ala-152, and Leu-153. Residues Cys-211 and Cys-213 are each lipidated (S-geranylgeranyl cysteine). A Cysteine methyl ester modification is found at Cys-213.

It belongs to the small GTPase superfamily. Rab family. Requires Mg(2+) as cofactor.

The protein resides in the membrane. It localises to the cytoplasm. The protein localises to the early endosome membrane. It is found in the recycling endosome membrane. The enzyme catalyses GTP + H2O = GDP + phosphate + H(+). Regulated by guanine nucleotide exchange factors (GEFs) which promote the exchange of bound GDP for free GTP. Regulated by GTPase activating proteins (GAPs) which increase the GTP hydrolysis activity. Inhibited by GDP dissociation inhibitors (GDIs). In terms of biological role, the small GTPases Rab are key regulators of intracellular membrane trafficking, from the formation of transport vesicles to their fusion with membranes. Rabs cycle between an inactive GDP-bound form and an active GTP-bound form that is able to recruit to membranes different sets of downstream effectors directly responsible for vesicle formation, movement, tethering and fusion. RAB4A is involved in protein transport. Also plays a role in vesicular traffic. Mediates VEGFR2 endosomal trafficking to enhance VEGFR2 signaling. Acts as a regulator of platelet alpha-granule release during activation and aggregation of platelets. This chain is Ras-related protein Rab-4A (rab4a), found in Danio rerio (Zebrafish).